The primary structure comprises 139 residues: Natriuretic peptide Mf-NP (139 aa).

Positions 1-25 (MVGLSRLTGGGLLLVLALLPLALDG) are cleaved as a signal peptide. Residues 26-75 (KPLEEAPTAPSRIIPFSRPVRKESQAVLDPMVHPERPAGSGDDGDLSRLE) constitute a propeptide that is removed on maturation. A disulfide bridge connects residues C86 and C102. A propeptide spanning residues 117–139 (IIPFSRPVRKESRAALDRMQHPG) is cleaved from the precursor.

The protein belongs to the natriuretic peptide family. Expressed by the venom gland.

It localises to the secreted. Functionally, natriuretic peptide that dose-dependently induces the rapid relaxation of rat aortic strips phenylephrine-precontracted. Acts by stimulating cGMP production in a dose-dependent manner (by probably activating NPR1 and/or NPR2). May also show potent hypotensive effects. The chain is Natriuretic peptide Mf-NP from Micrurus fulvius (Eastern coral snake).